Reading from the N-terminus, the 419-residue chain is MNIIDELEWRGAIYQQTDEEGLRKWVEEKQISLYCGIDPSGDSMHIGHLIPFMILRRFQNAGHRPIILVGGATGTIGDPSGKKEERKLQSMEQISKNVESLRVQLGKIFDFEGNSAASMVNNYDWTKDVSILDFLRDYGKEFNVNTMLSKDIVASRLEVGISFTEFAYQILQAMDFNHLYEFNDCRLQIGGSDQWGNITAGLDLIRKKQGENAKAFGLTIPLLTKADGTKFGKSEGGAIWLNPEKTTPYEFYQFWINTDDRDVVKYLKYFTFLTEAEIDELAKQVETEPHLRAAQKTLAAEMTKFVHSEEALEQALKISKALFSGDVKALTADEIEQGFKDVPTFVAEDSEANLVDWLVTLGIEPSKRQAREDVGNGAIYINGERQQDLEKIMDASDRIENKFTIVRRGKKKYFLVSYK.

Position 34 (Tyr-34) interacts with L-tyrosine. The 'HIGH' region motif lies at 39–48 (PSGDSMHIGH). L-tyrosine contacts are provided by Tyr-168 and Gln-172. Positions 230 to 234 (KFGKS) match the 'KMSKS' region motif. ATP is bound at residue Lys-233. The S4 RNA-binding domain maps to 352-418 (ANLVDWLVTL…GKKKYFLVSY (67 aa)).

It belongs to the class-I aminoacyl-tRNA synthetase family. TyrS type 1 subfamily. Homodimer.

It is found in the cytoplasm. The enzyme catalyses tRNA(Tyr) + L-tyrosine + ATP = L-tyrosyl-tRNA(Tyr) + AMP + diphosphate + H(+). Functionally, catalyzes the attachment of tyrosine to tRNA(Tyr) in a two-step reaction: tyrosine is first activated by ATP to form Tyr-AMP and then transferred to the acceptor end of tRNA(Tyr). The polypeptide is Tyrosine--tRNA ligase (Listeria monocytogenes serovar 1/2a (strain ATCC BAA-679 / EGD-e)).